The primary structure comprises 631 residues: 1-deoxy-D-xylulose-5-phosphate synthase (631 aa).

Thiamine diphosphate contacts are provided by residues His87 and 128–130; that span reads GHS. Asp159 contributes to the Mg(2+) binding site. Residues 160–161, Asn188, Phe295, and Glu377 each bind thiamine diphosphate; that span reads GA. Asn188 lines the Mg(2+) pocket.

Belongs to the transketolase family. DXPS subfamily. In terms of assembly, homodimer. Requires Mg(2+) as cofactor. It depends on thiamine diphosphate as a cofactor.

The enzyme catalyses D-glyceraldehyde 3-phosphate + pyruvate + H(+) = 1-deoxy-D-xylulose 5-phosphate + CO2. It participates in metabolic intermediate biosynthesis; 1-deoxy-D-xylulose 5-phosphate biosynthesis; 1-deoxy-D-xylulose 5-phosphate from D-glyceraldehyde 3-phosphate and pyruvate: step 1/1. Catalyzes the acyloin condensation reaction between C atoms 2 and 3 of pyruvate and glyceraldehyde 3-phosphate to yield 1-deoxy-D-xylulose-5-phosphate (DXP). The chain is 1-deoxy-D-xylulose-5-phosphate synthase from Pseudomonas putida (strain ATCC 47054 / DSM 6125 / CFBP 8728 / NCIMB 11950 / KT2440).